A 227-amino-acid polypeptide reads, in one-letter code: Orotidine 5'-phosphate decarboxylase (227 aa).

Substrate-binding positions include aspartate 8, lysine 30, 59 to 68 (DLKLYDIPYT), threonine 118, arginine 178, glutamine 187, glycine 207, and arginine 208. Lysine 61 serves as the catalytic Proton donor.

This sequence belongs to the OMP decarboxylase family. Type 1 subfamily. As to quaternary structure, homodimer.

It carries out the reaction orotidine 5'-phosphate + H(+) = UMP + CO2. It participates in pyrimidine metabolism; UMP biosynthesis via de novo pathway; UMP from orotate: step 2/2. Catalyzes the decarboxylation of orotidine 5'-monophosphate (OMP) to uridine 5'-monophosphate (UMP). This is Orotidine 5'-phosphate decarboxylase from Helicobacter pylori (strain ATCC 700392 / 26695) (Campylobacter pylori).